A 465-amino-acid chain; its full sequence is MKIYNTLTKTKEEFIPREPGKVYMYVCGPTTYNYIHIGNARPIVFFDTVRRYFEYKGFEVIYVQNFTDIDDKIINRALEEGISPIELGQKYIIEYFKDADRLGVKRATVHPKVTEHIPEIIEMVKGLIEKGYAYEVEGNVYFAVDSFSDYGKLSGRDLEELKAGARVEVDEKKKNPLDFALWKKAKPGEPYWESPWGPGRPGWHIECSAMSLKYLGENFDIHGGGADLVFPHHENEVAQSEAFTGKPFARYWMHNGFITVNQEKMSKSLGNFFLVREILEKFPGRVVRFFLLSTHYRSPLDFDDKKLNEAKAALERVDNFVQNLKEVNPLPGEARIEIQEKITNFLRDFNEAMEDDFNTAQAMASLFELVRFGNTQIASGNLTAGDKKLFEEALNVYTQVFGIEFGVLEKIAGEDITPFVELLIEVRARLKKEKKYDLADFIRDELKKQGIILEDTPKGVRWKRV.

Residue cysteine 27 coordinates Zn(2+). A 'HIGH' region motif is present at residues 29–39; the sequence is PTTYNYIHIGN. Positions 207, 232, and 236 each coordinate Zn(2+). Residues 264-268 carry the 'KMSKS' region motif; the sequence is KMSKS. Lysine 267 is a binding site for ATP.

This sequence belongs to the class-I aminoacyl-tRNA synthetase family. In terms of assembly, monomer. The cofactor is Zn(2+).

It localises to the cytoplasm. The enzyme catalyses tRNA(Cys) + L-cysteine + ATP = L-cysteinyl-tRNA(Cys) + AMP + diphosphate. This Carboxydothermus hydrogenoformans (strain ATCC BAA-161 / DSM 6008 / Z-2901) protein is Cysteine--tRNA ligase.